Reading from the N-terminus, the 423-residue chain is Chitinase 1 (423 aa).

A signal peptide spans 1 to 22 (MLSFVKKSIALVAALQAVTALA). The propeptide occupies 23–34 (TPISSEAGVEKR). A GH18 domain is found at 38-401 (FANAVYFTNW…STSHQGLGSQ (364 aa)). Chitin is bound by residues 102–103 (GT) and 129–132 (GGWT). Residue Glu171 is the Proton donor of the active site. Residues Tyr172, 237-240 (MAYD), and Trp378 each bind chitin.

This sequence belongs to the glycosyl hydrolase 18 family. Chitinase class V subfamily.

Its subcellular location is the secreted. It catalyses the reaction Random endo-hydrolysis of N-acetyl-beta-D-glucosaminide (1-&gt;4)-beta-linkages in chitin and chitodextrins.. This chain is Chitinase 1 (CHI1), found in Aphanocladium album (Wheat rust fungus).